Here is a 228-residue protein sequence, read N- to C-terminus: Urease accessory protein UreE (228 aa).

The disordered stretch occupies residues H193–H228. The segment covering S204 to H228 has biased composition (basic and acidic residues).

It belongs to the UreE family.

The protein localises to the cytoplasm. Functionally, involved in urease metallocenter assembly. Binds nickel. Probably functions as a nickel donor during metallocenter assembly. The polypeptide is Urease accessory protein UreE (Yersinia rohdei).